Here is a 201-residue protein sequence, read N- to C-terminus: Probable molybdenum cofactor guanylyltransferase (201 aa).

GTP contacts are provided by residues 6 to 8, Lys18, Asp65, and Asp97; that span reads LAG. Asp97 provides a ligand contact to Mg(2+).

This sequence belongs to the MobA family. It depends on Mg(2+) as a cofactor.

The protein localises to the cytoplasm. It catalyses the reaction Mo-molybdopterin + GTP + H(+) = Mo-molybdopterin guanine dinucleotide + diphosphate. In terms of biological role, transfers a GMP moiety from GTP to Mo-molybdopterin (Mo-MPT) cofactor (Moco or molybdenum cofactor) to form Mo-molybdopterin guanine dinucleotide (Mo-MGD) cofactor. The chain is Probable molybdenum cofactor guanylyltransferase from Staphylococcus haemolyticus (strain JCSC1435).